Consider the following 210-residue polypeptide: Mitochondrial cardiolipin hydrolase (210 aa).

Residues 1-6 (MLLWGR) are Mitochondrial intermembrane-facing. The helical transmembrane segment at 7–24 (WKVVAGLAGLALSLELLL) threads the bilayer. Over 25–210 (RYMRRRKPIR…YDFFPEKENK (186 aa)) the chain is Cytoplasmic. The PLD phosphodiesterase domain maps to 138-165 (SSGYMHHKFAVVDGTVVLTGSLNWTVQA). Residues H143, K145, and D150 contribute to the active site.

It belongs to the phospholipase D family. MitoPLD/Zucchini subfamily. Homodimer.

Its subcellular location is the mitochondrion outer membrane. The enzyme catalyses a cardiolipin + H2O = a 1,2-diacyl-sn-glycero-3-phospho-(1'-sn-glycerol) + a 1,2-diacyl-sn-glycero-3-phosphate + H(+). Presents phospholipase and nuclease activities, depending on the different physiological conditions. Plays a key role in mitochondrial fusion and fission via its phospholipase activity. In its phospholipase role, it uses the mitochondrial lipid cardiolipin as substrate to generate phosphatidate (PA or 1,2-diacyl-sn-glycero-3-phosphate), a second messenger signaling lipid. Production of PA facilitates Mitofusin-mediated fusion, whereas the cleavage of PA by the Lipin family of phosphatases produces diacylgycerol (DAG) which promotes mitochondrial fission. Regulates mitochondrial shape through facilitating mitochondrial fusion. During spermatogenesis, plays a critical role in PIWI-interacting RNA (piRNA) biogenesis. piRNAs provide essential protection against the activity of mobile genetic elements. piRNA-mediated transposon silencing is thus critical for maintaining genome stability, in particular in germline cells when transposons are mobilized as a consequence of wide-spread genomic demethylation. Has been shown to be a backbone-non-specific, single strand-specific nuclease, cleaving either RNA or DNA substrates with similar affinity. Produces 5' phosphate and 3' hydroxyl termini, suggesting it could directly participate in the processing of primary piRNA transcripts. Has been proposed to act as a cardiolipin hydrolase to generate phosphatidic acid at mitochondrial surface. Although it cannot be excluded that it can act as a phospholipase in some circumstances, this activity could not be confirmed. The protein is Mitochondrial cardiolipin hydrolase (pld6) of Xenopus tropicalis (Western clawed frog).